Consider the following 798-residue polypeptide: Metabotropic glutamate receptor-like protein A (798 aa).

Residues M1–S23 form the signal peptide. Topologically, residues L24–L388 are extracellular. N186, N275, and N320 each carry an N-linked (GlcNAc...) asparagine glycan. The helical transmembrane segment at T389–F409 threads the bilayer. Residues R410–S419 lie on the Cytoplasmic side of the membrane. The helical transmembrane segment at P420–F440 threads the bilayer. The Extracellular segment spans residues S441 to G447. A helical membrane pass occupies residues I448–L468. Topologically, residues V469–Y494 are cytoplasmic. Residues P495–G515 traverse the membrane as a helical segment. Topologically, residues D516 to V545 are extracellular. The chain crosses the membrane as a helical span at residues A546 to F566. Over K567–K580 the chain is Cytoplasmic. A helical membrane pass occupies residues P581–V601. Topologically, residues S602–Q609 are extracellular. A helical membrane pass occupies residues V610 to G630. The Cytoplasmic portion of the chain corresponds to S631–V798. Residues A714–K771 adopt a coiled-coil conformation. Basic and acidic residues predominate over residues E752–E774. A disordered region spans residues E752 to V798.

In the N-terminal section; belongs to the BMP lipoprotein family. It in the C-terminal section; belongs to the G-protein coupled receptor 3 family. GABA-B receptor subfamily.

The protein resides in the membrane. It is found in the cytoplasm. Its subcellular location is the cell cortex. It localises to the perinuclear region. May play an important role in the terminal differentiation. This is Metabotropic glutamate receptor-like protein A (grlA) from Dictyostelium discoideum (Social amoeba).